The following is a 102-amino-acid chain: Small ribosomal subunit protein uS10 (102 aa).

It belongs to the universal ribosomal protein uS10 family. Part of the 30S ribosomal subunit.

Its function is as follows. Involved in the binding of tRNA to the ribosomes. This is Small ribosomal subunit protein uS10 from Bacillus cereus (strain ATCC 10987 / NRS 248).